Reading from the N-terminus, the 287-residue chain is Small ribosomal subunit protein uS2 (287 aa).

Residues 254 to 277 (LASATASATPSATASTTALTDAPA) are compositionally biased toward low complexity. Residues 254–287 (LASATASATPSATASTTALTDAPAGATEPTTDAS) are disordered.

It belongs to the universal ribosomal protein uS2 family.

The protein is Small ribosomal subunit protein uS2 (rpsB) of Mycobacterium tuberculosis (strain CDC 1551 / Oshkosh).